The sequence spans 397 residues: LIM/homeobox protein Lhx9 (397 aa).

LIM zinc-binding domains lie at 69-130 and 131-193; these read ALCA…RFSV and QRCA…LLQG. 2 disordered regions span residues 248–272 and 330–364; these read ENEADHLDRDQQPYPPSQKTKRMRT and ENGGVDKADGTSLPAPPSADSGALSPPGTATTLTD. The segment at residues 267-326 is a DNA-binding region (homeobox); the sequence is TKRMRTSFKHHQLRTMKSYFAINHNPDAKDLKQLAQKTGLTKRVLQVWFQNARAKFRRNL.

In terms of assembly, interacts with LDB1 and LDB2.

It localises to the nucleus. In terms of biological role, involved in gonadal development. The polypeptide is LIM/homeobox protein Lhx9 (LHX9) (Bos taurus (Bovine)).